A 381-amino-acid polypeptide reads, in one-letter code: Chorismate synthase (381 aa).

NADP(+)-binding residues include Arg41 and Arg47. FMN-binding positions include 127–129, 247–248, Gly291, 306–310, and Arg332; these read RAS, QA, and KPIPT.

The protein belongs to the chorismate synthase family. In terms of assembly, homotetramer. FMNH2 serves as cofactor.

It carries out the reaction 5-O-(1-carboxyvinyl)-3-phosphoshikimate = chorismate + phosphate. It functions in the pathway metabolic intermediate biosynthesis; chorismate biosynthesis; chorismate from D-erythrose 4-phosphate and phosphoenolpyruvate: step 7/7. Catalyzes the anti-1,4-elimination of the C-3 phosphate and the C-6 proR hydrogen from 5-enolpyruvylshikimate-3-phosphate (EPSP) to yield chorismate, which is the branch point compound that serves as the starting substrate for the three terminal pathways of aromatic amino acid biosynthesis. This reaction introduces a second double bond into the aromatic ring system. The polypeptide is Chorismate synthase (Anaeromyxobacter dehalogenans (strain 2CP-1 / ATCC BAA-258)).